A 360-amino-acid chain; its full sequence is Peptide chain release factor 1 (360 aa).

An N5-methylglutamine modification is found at Gln-235. Positions 285 to 314 are disordered; it reads KRQQAEASTRRNLLGSGDRSDRNRTYNFPQ.

It belongs to the prokaryotic/mitochondrial release factor family. Post-translationally, methylated by PrmC. Methylation increases the termination efficiency of RF1.

The protein localises to the cytoplasm. Its function is as follows. Peptide chain release factor 1 directs the termination of translation in response to the peptide chain termination codons UAG and UAA. This chain is Peptide chain release factor 1, found in Klebsiella pneumoniae subsp. pneumoniae (strain ATCC 700721 / MGH 78578).